Reading from the N-terminus, the 420-residue chain is Fasciclin-like arabinogalactan protein 8 (420 aa).

A signal peptide spans 1–25; that stretch reads MAASQTFSLLAFTFSLLAFASTVSS. 2 consecutive FAS1 domains span residues 26–172 and 186–326; these read HNIT…DAPI and SLSN…DNVL. N27, N128, N162, N189, and N273 each carry an N-linked (GlcNAc...) asparagine glycan. The disordered stretch occupies residues 335 to 394; it reads SKSPSPAPAPEPVTAPTPSPADAPSPTAASPPAPPTDESPESAPSDSPTGSANSKSANAA. Pro residues predominate over residues 339-371; that stretch reads SPAPAPEPVTAPTPSPADAPSPTAASPPAPPTD. N392 is lipidated: GPI-anchor amidated asparagine. Positions 393-420 are cleaved as a propeptide — removed in mature form; that stretch reads AAVGVSTPSLFTALVTIAAIAVSVSLCS.

The protein belongs to the fasciclin-like AGP family. As to expression, expressed mainly in flowers and to a lesser extent in leaves and roots.

Its subcellular location is the cell membrane. In terms of biological role, may be a cell surface adhesion protein. The polypeptide is Fasciclin-like arabinogalactan protein 8 (FLA8) (Arabidopsis thaliana (Mouse-ear cress)).